The sequence spans 451 residues: Phosphoglucosamine mutase (451 aa).

The Phosphoserine intermediate role is filled by S104. Mg(2+) contacts are provided by S104, D242, D244, and D246. Residue S104 is modified to Phosphoserine.

The protein belongs to the phosphohexose mutase family. Mg(2+) is required as a cofactor. Activated by phosphorylation.

The enzyme catalyses alpha-D-glucosamine 1-phosphate = D-glucosamine 6-phosphate. Functionally, catalyzes the conversion of glucosamine-6-phosphate to glucosamine-1-phosphate. The polypeptide is Phosphoglucosamine mutase (Kocuria rhizophila (strain ATCC 9341 / DSM 348 / NBRC 103217 / DC2201)).